A 31-amino-acid polypeptide reads, in one-letter code: MEPNQHVEAETELVTETLVEEVSIDGMCGVY.

The protein belongs to the mycofactocin precursor peptide family. Post-translationally, the post-translational modifications that lead to mycofactocin involve oxidative decarboxylation of the C-terminal tyrosine residue catalyzed by MftC, introduction of a tyramine-valine cross-link, removal of the modified C-terminal dipeptide by MftE. The released dipeptide then undergoes oxidative deamination by MftD, glycosylation by MftF and methylation by an unknown enzyme.

Precursor peptide that leads to mycofactocin (MFT) after extensive post-translational modifications by enzymes encoded by adjacent genes. Mycofactocin acts as a redox cofactor of nicotinamide-dependent oxidoreductases encoded in the same locus. Is required for the in vivo ethanol assimilation in M.smegmatis. This is Mycofactocin precursor peptide from Mycolicibacterium smegmatis (strain ATCC 700084 / mc(2)155) (Mycobacterium smegmatis).